The sequence spans 342 residues: tRNA N6-adenosine threonylcarbamoyltransferase (342 aa).

Fe cation is bound by residues histidine 120 and histidine 124. Substrate-binding positions include valine 142–glycine 146, aspartate 175, glycine 188, aspartate 192, and asparagine 281. Aspartate 310 contributes to the Fe cation binding site.

It belongs to the KAE1 / TsaD family. It depends on Fe(2+) as a cofactor.

The protein resides in the cytoplasm. It carries out the reaction L-threonylcarbamoyladenylate + adenosine(37) in tRNA = N(6)-L-threonylcarbamoyladenosine(37) in tRNA + AMP + H(+). Functionally, required for the formation of a threonylcarbamoyl group on adenosine at position 37 (t(6)A37) in tRNAs that read codons beginning with adenine. Is involved in the transfer of the threonylcarbamoyl moiety of threonylcarbamoyl-AMP (TC-AMP) to the N6 group of A37, together with TsaE and TsaB. TsaD likely plays a direct catalytic role in this reaction. In Geobacillus kaustophilus (strain HTA426), this protein is tRNA N6-adenosine threonylcarbamoyltransferase.